A 308-amino-acid chain; its full sequence is Ornithine carbamoyltransferase (308 aa).

Carbamoyl phosphate is bound by residues 51-54 (STRT), glutamine 78, arginine 102, and 129-132 (HPTQ). L-ornithine is bound by residues asparagine 160, aspartate 224, and 228–229 (SM). Carbamoyl phosphate contacts are provided by residues 264–265 (CL) and arginine 292.

The protein belongs to the aspartate/ornithine carbamoyltransferase superfamily. OTCase family.

It localises to the cytoplasm. It carries out the reaction carbamoyl phosphate + L-ornithine = L-citrulline + phosphate + H(+). Its pathway is amino-acid biosynthesis; L-arginine biosynthesis; L-arginine from L-ornithine and carbamoyl phosphate: step 1/3. In terms of biological role, reversibly catalyzes the transfer of the carbamoyl group from carbamoyl phosphate (CP) to the N(epsilon) atom of ornithine (ORN) to produce L-citrulline. The polypeptide is Ornithine carbamoyltransferase (Caldicellulosiruptor saccharolyticus (strain ATCC 43494 / DSM 8903 / Tp8T 6331)).